A 671-amino-acid chain; its full sequence is Diguanylate cyclase DgcP (671 aa).

Disordered regions lie at residues 204–223 (AAPS…PPQP) and 278–298 (EAGA…PEAP). Asp549 is a Mg(2+) binding site. Substrate contacts are provided by Asn557, His562, and Asp566. Glu592 contacts Mg(2+). Glu592 is an active-site residue.

As to quaternary structure, homodimer. Mg(2+) serves as cofactor.

It is found in the cell inner membrane. It catalyses the reaction 2 GTP = 3',3'-c-di-GMP + 2 diphosphate. The protein operates within purine metabolism; 3',5'-cyclic di-GMP biosynthesis. Catalyzes the synthesis of cyclic-di-GMP (c-di-GMP) via the condensation of 2 GTP molecules. Cyclic-di-GMP is a second messenger which controls cell surface-associated traits in bacteria. Localizes at the cell poles through interaction with FimV where it increases the local pools of c-di-GMP. In Pseudomonas aeruginosa (strain ATCC 15692 / DSM 22644 / CIP 104116 / JCM 14847 / LMG 12228 / 1C / PRS 101 / PAO1), this protein is Diguanylate cyclase DgcP (dgcP).